Reading from the N-terminus, the 270-residue chain is Ethanolamine ammonia-lyase small subunit (270 aa).

Positions 161, 182, and 211 each coordinate adenosylcob(III)alamin.

This sequence belongs to the EutC family. In terms of assembly, the basic unit is a heterodimer which dimerizes to form tetramers. The heterotetramers trimerize; 6 large subunits form a core ring with 6 small subunits projecting outwards. Adenosylcob(III)alamin is required as a cofactor.

The protein resides in the bacterial microcompartment. The enzyme catalyses ethanolamine = acetaldehyde + NH4(+). It functions in the pathway amine and polyamine degradation; ethanolamine degradation. Its function is as follows. Catalyzes the deamination of various vicinal amino-alcohols to oxo compounds. Allows this organism to utilize ethanolamine as the sole source of nitrogen and carbon in the presence of external vitamin B12. The chain is Ethanolamine ammonia-lyase small subunit from Azotobacter vinelandii (strain DJ / ATCC BAA-1303).